The chain runs to 301 residues: Methionyl-tRNA formyltransferase (301 aa).

109-112 (SLLP) is a (6S)-5,6,7,8-tetrahydrofolate binding site.

Belongs to the Fmt family.

The enzyme catalyses L-methionyl-tRNA(fMet) + (6R)-10-formyltetrahydrofolate = N-formyl-L-methionyl-tRNA(fMet) + (6S)-5,6,7,8-tetrahydrofolate + H(+). Its function is as follows. Attaches a formyl group to the free amino group of methionyl-tRNA(fMet). The formyl group appears to play a dual role in the initiator identity of N-formylmethionyl-tRNA by promoting its recognition by IF2 and preventing the misappropriation of this tRNA by the elongation apparatus. The protein is Methionyl-tRNA formyltransferase of Jannaschia sp. (strain CCS1).